The chain runs to 118 residues: Mu-like prophage FluMu tail tube protein (118 aa).

Positions 12 to 32 (RLNGKEWPSDNDGTLTPGGKE) are disordered.

It to phage Mu protein M.

The chain is Mu-like prophage FluMu tail tube protein from Haemophilus influenzae (strain ATCC 51907 / DSM 11121 / KW20 / Rd).